We begin with the raw amino-acid sequence, 378 residues long: Ribosomal RNA large subunit methyltransferase G (378 aa).

Belongs to the methyltransferase superfamily. RlmG family.

The protein localises to the cytoplasm. It catalyses the reaction guanosine(1835) in 23S rRNA + S-adenosyl-L-methionine = N(2)-methylguanosine(1835) in 23S rRNA + S-adenosyl-L-homocysteine + H(+). Its function is as follows. Specifically methylates the guanine in position 1835 (m2G1835) of 23S rRNA. The protein is Ribosomal RNA large subunit methyltransferase G of Escherichia coli O6:K15:H31 (strain 536 / UPEC).